The primary structure comprises 340 residues: Putative transport protein AF_1800 (340 aa).

Helical transmembrane passes span 7–27 (LVLLLSILVVLALTFYFFTPL), 57–77 (SVIATAIVILPISVLMFYGLI), 140–160 (TLLILNFFISIVVCFYALADM), 193–213 (LWFGNFVVAILIGLVSLPFFL), 225–245 (GLMFLAALIPIFAEWMIILPV), 260–280 (FLLIGVVFLYVLPELILRPYF), and 290–310 (LVLMLAFIGGGLVGGISGFFI).

The protein belongs to the autoinducer-2 exporter (AI-2E) (TC 2.A.86) family.

The protein localises to the cell membrane. This Archaeoglobus fulgidus (strain ATCC 49558 / DSM 4304 / JCM 9628 / NBRC 100126 / VC-16) protein is Putative transport protein AF_1800.